The chain runs to 682 residues: Potassium-transporting ATPase ATP-binding subunit (682 aa).

4 helical membrane passes run P34 to V54, I58 to F78, I219 to L239, and V254 to I274. The active-site 4-aspartylphosphate intermediate is D307. Residues D344, E348, F377–S384, and K395 each bind ATP. The Mg(2+) site is built by D518 and D522. 3 helical membrane-spanning segments follow: residues F588–M608, A616–L636, and L662–A682.

Belongs to the cation transport ATPase (P-type) (TC 3.A.3) family. Type IA subfamily. The system is composed of three essential subunits: KdpA, KdpB and KdpC.

It localises to the cell inner membrane. It carries out the reaction K(+)(out) + ATP + H2O = K(+)(in) + ADP + phosphate + H(+). Its function is as follows. Part of the high-affinity ATP-driven potassium transport (or Kdp) system, which catalyzes the hydrolysis of ATP coupled with the electrogenic transport of potassium into the cytoplasm. This subunit is responsible for energy coupling to the transport system and for the release of the potassium ions to the cytoplasm. This Salmonella paratyphi A (strain ATCC 9150 / SARB42) protein is Potassium-transporting ATPase ATP-binding subunit.